Reading from the N-terminus, the 251-residue chain is Ubiquinone/menaquinone biosynthesis C-methyltransferase UbiE (251 aa).

S-adenosyl-L-methionine contacts are provided by residues Thr74, Asp95, 123–124, and Ser140; that span reads NA.

Belongs to the class I-like SAM-binding methyltransferase superfamily. MenG/UbiE family.

The enzyme catalyses a 2-demethylmenaquinol + S-adenosyl-L-methionine = a menaquinol + S-adenosyl-L-homocysteine + H(+). It carries out the reaction a 2-methoxy-6-(all-trans-polyprenyl)benzene-1,4-diol + S-adenosyl-L-methionine = a 5-methoxy-2-methyl-3-(all-trans-polyprenyl)benzene-1,4-diol + S-adenosyl-L-homocysteine + H(+). It functions in the pathway quinol/quinone metabolism; menaquinone biosynthesis; menaquinol from 1,4-dihydroxy-2-naphthoate: step 2/2. It participates in cofactor biosynthesis; ubiquinone biosynthesis. Methyltransferase required for the conversion of demethylmenaquinol (DMKH2) to menaquinol (MKH2) and the conversion of 2-polyprenyl-6-methoxy-1,4-benzoquinol (DDMQH2) to 2-polyprenyl-3-methyl-6-methoxy-1,4-benzoquinol (DMQH2). This chain is Ubiquinone/menaquinone biosynthesis C-methyltransferase UbiE, found in Klebsiella pneumoniae (strain 342).